Consider the following 105-residue polypeptide: Vacuolar ATPase assembly integral membrane protein VMA21 homolog (105 aa).

Positions 1–26 (MSTKNKKAAGGNGVAPKQTRQQSHDS) are disordered. Residues 1 to 36 (MSTKNKKAAGGNGVAPKQTRQQSHDSQDYSSFKTVL) lie on the Cytoplasmic side of the membrane. Residues 37–57 (FYCMLIVFLPVLTFFVLKGFV) form a helical membrane-spanning segment. Over 58–68 (LDQFLDISEVK) the chain is Lumenal. Residues 69–89 (VNIASAVGAVVALHIALGLYI) form a helical membrane-spanning segment. Topologically, residues 90-105 (YRAYFGAPGSKGSKTD) are cytoplasmic.

This sequence belongs to the VMA21 family.

The protein resides in the endoplasmic reticulum membrane. It is found in the endoplasmic reticulum-Golgi intermediate compartment membrane. Its subcellular location is the cytoplasmic vesicle. It localises to the COPII-coated vesicle membrane. Functionally, required for the assembly of the V0 complex of the vacuolar ATPase (V-ATPase) in the endoplasmic reticulum. The protein is Vacuolar ATPase assembly integral membrane protein VMA21 homolog of Drosophila melanogaster (Fruit fly).